A 511-amino-acid polypeptide reads, in one-letter code: Tryptophan 5-halogenase PyrH (511 aa).

FAD contacts are provided by glycine 10, alanine 13, serine 36, valine 39, isoleucine 42, valine 44, and alanine 47. Serine 50 is a binding site for L-tryptophan. The active site involves lysine 75. 3 residues coordinate L-tryptophan: proline 93, glutamine 160, and glutamine 163. The FAD site is built by valine 195 and leucine 345. Chloride contacts are provided by threonine 356 and glycine 357. Residue isoleucine 358 coordinates FAD. L-tryptophan contacts are provided by glycine 450 and tyrosine 454.

It belongs to the flavin-dependent halogenase family. Bacterial tryptophan halogenase subfamily. As to quaternary structure, homodimer.

It catalyses the reaction L-tryptophan + FADH2 + chloride + O2 = 5-chloro-L-tryptophan + FAD + 2 H2O. It functions in the pathway antibiotic biosynthesis. Involved in the biosynthesis of the antibiotic compound pyrroindomycin B. Catalyzes the chlorination of tryptophan (Trp) at C5 position to yield 5-chloro-L-tryptophan. It is also able to use bromide ions to generate monobrominated Trp, but the brominating activity is only about 75% of the chlorinating activity. The polypeptide is Tryptophan 5-halogenase PyrH (Streptomyces rugosporus).